The chain runs to 23 residues: Keratin (23 aa).

One can recognise an IF rod domain in the interval 1–23; the sequence is YSSQLAQVQGLIGNVESQLAEIR. The coil 2 stretch occupies residues 1–23; the sequence is YSSQLAQVQGLIGNVESQLAEIR.

The protein belongs to the intermediate filament family.

This is Keratin from Cervus elaphus (Red deer).